Consider the following 71-residue polypeptide: UPF0346 protein SSU05_1322 (71 aa).

This sequence belongs to the UPF0346 family.

The chain is UPF0346 protein SSU05_1322 from Streptococcus suis (strain 05ZYH33).